Reading from the N-terminus, the 107-residue chain is Nucleoid-associated protein RP866 (107 aa).

The protein belongs to the YbaB/EbfC family. In terms of assembly, homodimer.

The protein resides in the cytoplasm. It localises to the nucleoid. Its function is as follows. Binds to DNA and alters its conformation. May be involved in regulation of gene expression, nucleoid organization and DNA protection. This Rickettsia prowazekii (strain Madrid E) protein is Nucleoid-associated protein RP866.